A 209-amino-acid chain; its full sequence is FMN-dependent NADH:quinone oxidoreductase (209 aa).

Residues Ser9, 19-21 (SVS), and 143-146 (TRGG) contribute to the FMN site.

It belongs to the azoreductase type 1 family. As to quaternary structure, homodimer. FMN is required as a cofactor.

The enzyme catalyses 2 a quinone + NADH + H(+) = 2 a 1,4-benzosemiquinone + NAD(+). It carries out the reaction N,N-dimethyl-1,4-phenylenediamine + anthranilate + 2 NAD(+) = 2-(4-dimethylaminophenyl)diazenylbenzoate + 2 NADH + 2 H(+). Its function is as follows. Quinone reductase that provides resistance to thiol-specific stress caused by electrophilic quinones. Also exhibits azoreductase activity. Catalyzes the reductive cleavage of the azo bond in aromatic azo compounds to the corresponding amines. This is FMN-dependent NADH:quinone oxidoreductase from Leptothrix cholodnii (strain ATCC 51168 / LMG 8142 / SP-6) (Leptothrix discophora (strain SP-6)).